A 326-amino-acid polypeptide reads, in one-letter code: MALTMLLLLVAAALTLIETRAGPHSLRYFHTAVSWPGLVEPRFIIVGYVDDTQFVRFDSDAENPRMEPRARWMEQEGPEYWERETQKAKGHEESFRVSLRTAQRYYNQSKGGSHTLQWMYGCDVGSDERLLRGYLQFAYEGRDYIALNEDLKTWTAADMAAQITLHKWEQAGIAERDRAYLEGACVQSLRRYLQLRKETLLCTDPPKAHVTHHPRSYGAVTLRCWALGFYPADITLTWQLNGEELTQDMELVETRPAGDGTFQKWASVVVPLGKEQNYTCHVNHEGLPEPLTLRWEPPPSTVSNMANVAILVVLVAWPSLELWWIL.

Positions 1–21 (MALTMLLLLVAAALTLIETRA) are cleaved as a signal peptide. Positions 22–111 (GPHSLRYFHT…AQRYYNQSKG (90 aa)) are alpha-1. The Extracellular segment spans residues 22–305 (GPHSLRYFHT…EPPPSTVSNM (284 aa)). N-linked (GlcNAc...) asparagine glycosylation occurs at asparagine 107. Residues 112–203 (GSHTLQWMYG…QLRKETLLCT (92 aa)) are alpha-2. 2 cysteine pairs are disulfide-bonded: cysteine 122–cysteine 185 and cysteine 224–cysteine 280. The tract at residues 204–295 (DPPKAHVTHH…GLPEPLTLRW (92 aa)) is alpha-3. One can recognise an Ig-like C1-type domain in the interval 206–294 (PKAHVTHHPR…EGLPEPLTLR (89 aa)). The N-linked (GlcNAc...) asparagine glycan is linked to asparagine 277. Residues 296-305 (EPPPSTVSNM) form a connecting peptide region. A helical transmembrane segment spans residues 306 to 326 (ANVAILVVLVAWPSLELWWIL).

It belongs to the MHC class I family. Heterodimer of an alpha chain and a beta chain (beta-2-microglobulin).

Its subcellular location is the membrane. In terms of biological role, involved in the presentation of foreign antigens to the immune system. The polypeptide is H-2 class I histocompatibility antigen, Q8 alpha chain (H2-Q8) (Mus musculus (Mouse)).